We begin with the raw amino-acid sequence, 83 residues long: Polcalcin Bra r 2 (83 aa).

EF-hand domains lie at 5-40 (TEKA…LGSV) and 43-75 (DDIK…NRGL). D18, N20, D22, K24, E29, D53, D55, D57, Y59, and E64 together coordinate Ca(2+).

This is Polcalcin Bra r 2 from Brassica campestris (Field mustard).